Reading from the N-terminus, the 353-residue chain is MAYEKELDAAKKAASLAARLCQKVQKALLQSDVQSKSDKSPVTVADYGSQAVVSLVLEKELSSEPFSLVAEEDSGDLRKDGSQDTLERITKLVNDTLATEESFNGSTLSTDDLLRAIDCGTSEGGPNGRHWVLDPIDGTKGFLRGDQYAVALGLLEEGKVVLGVLACPNLPLASIAGNNKNKSSSDEIGCLFFATIGSGTYMQLLDSKSSPVKVQVSSVENPEEASFFESFEGAHSLHDLSSSIANKLGVKAPPVRIDSQAKYGALSRGDGAIYLRFPHKGYREKIWDHVAGAIVVTEAGGIVTDAAGKPLDFSKGKYLDLDTGIIVANEKLMPLLLKAVRDSIAEQEKASAL.

Asp-46 serves as the catalytic Proton acceptor. Positions 71, 134, 136, and 137 each coordinate Mg(2+). Thr-139 functions as the Proton acceptor in the catalytic mechanism. The adenosine 3',5'-bisphosphate site is built by Thr-139, His-235, Ser-259, Lys-262, Arg-276, and Asp-288. Residues His-235, Ser-259, Lys-262, Arg-276, and Asp-288 each contribute to the AMP site. Mg(2+) is bound at residue Asp-288.

This sequence belongs to the inositol monophosphatase superfamily. Mg(2+) is required as a cofactor. Expressed in roots, leaves, stems, flowers and siliques.

It catalyses the reaction 3'-phosphoadenylyl sulfate + H2O = adenosine 5'-phosphosulfate + phosphate. The catalysed reaction is adenosine 3',5'-bisphosphate + H2O = AMP + phosphate. It carries out the reaction adenosine 2',5'-bisphosphate + H2O = AMP + phosphate. The enzyme catalyses 1D-myo-inositol 1,4-bisphosphate + H2O = 1D-myo-inositol 4-phosphate + phosphate. It catalyses the reaction 1D-myo-inositol 1,3,4-trisphosphate + H2O = 1D-myo-inositol 3,4-bisphosphate + phosphate. Its pathway is signal transduction; phosphatidylinositol signaling pathway. Its activity is regulated as follows. Inhibited non-competitively by Li(+) (IC(50)=0.20 mM) and Na(+) (IC(50)=200 mM). Phosphatase that converts adenosine 3'-phosphate 5'-phosphosulfate (PAPS) to adenosine 5'-phosphosulfate (APS) and 3'(2')-phosphoadenosine 5'-phosphate (PAP) to AMP. May regulate the flux of sulfur in the sulfur-activation pathway by converting PAPS to APS. May play a role in the biosynthesis of sulfate conjugates and RNA processing. Is also able to hydrolyze inositol 1,4-bisphosphate and inositol 1,3,4-trisphosphate. Could be considered as a negative regulator of abscisic acid (ABA)- and stress-responsive genes, through modulating the inositol 1,4,5-trisphosphate (IP3) turnover. Is also involved in salt tolerance. Acts as a suppressor of virus- and transgene-induced silencing. This chain is 3'(2'),5'-bisphosphate nucleotidase 1, found in Arabidopsis thaliana (Mouse-ear cress).